A 157-amino-acid chain; its full sequence is UPF0225 protein PSPPH_1399 (157 aa).

It belongs to the UPF0225 family.

The chain is UPF0225 protein PSPPH_1399 from Pseudomonas savastanoi pv. phaseolicola (strain 1448A / Race 6) (Pseudomonas syringae pv. phaseolicola (strain 1448A / Race 6)).